A 1482-amino-acid chain; its full sequence is Type VII secretion system protein EssC (1482 aa).

Over 1–229 (MHKLIIKYNK…RPPQPIQKNN (229 aa)) the chain is Cytoplasmic. Residues 230 to 252 (TVIWRSIIPPLVMIALTVVIFLV) traverse the membrane as a helical segment. The Extracellular portion of the chain corresponds to 253–256 (RPIG). A helical membrane pass occupies residues 257–279 (IYILMMIGMSTVTIVFGITTYFS). Topologically, residues 280–1482 (EKKKYNKDVE…EYQKIKLMEG (1203 aa)) are cytoplasmic. FtsK domains lie at 652-846 (DDIL…QDSN) and 997-1183 (QGPM…NELT). ATP contacts are provided by residues 672–679 (GTTGSGKS) and 1014–1021 (GSPGYGRT).

This sequence belongs to the EssC family. As to quaternary structure, homooligomer. Interacts with EsaE.

Its subcellular location is the cell membrane. In terms of biological role, component of the type VII secretion system (Ess). Required for the secretion of substrates including EsxA and EsxB. However, unable to support secretion of the substrate protein EsxC. This is Type VII secretion system protein EssC from Staphylococcus aureus (strain MRSA252).